The chain runs to 430 residues: Serine--tRNA ligase (430 aa).

234–236 (TAE) is a binding site for L-serine. An ATP-binding site is contributed by 265 to 267 (RRE). Position 288 (E288) interacts with L-serine. 352-355 (EISS) provides a ligand contact to ATP. Position 388 (S388) interacts with L-serine.

It belongs to the class-II aminoacyl-tRNA synthetase family. Type-1 seryl-tRNA synthetase subfamily. As to quaternary structure, homodimer. The tRNA molecule binds across the dimer.

The protein localises to the cytoplasm. The enzyme catalyses tRNA(Ser) + L-serine + ATP = L-seryl-tRNA(Ser) + AMP + diphosphate + H(+). It catalyses the reaction tRNA(Sec) + L-serine + ATP = L-seryl-tRNA(Sec) + AMP + diphosphate + H(+). The protein operates within aminoacyl-tRNA biosynthesis; selenocysteinyl-tRNA(Sec) biosynthesis; L-seryl-tRNA(Sec) from L-serine and tRNA(Sec): step 1/1. Its function is as follows. Catalyzes the attachment of serine to tRNA(Ser). Is also able to aminoacylate tRNA(Sec) with serine, to form the misacylated tRNA L-seryl-tRNA(Sec), which will be further converted into selenocysteinyl-tRNA(Sec). The polypeptide is Serine--tRNA ligase (Thermosynechococcus vestitus (strain NIES-2133 / IAM M-273 / BP-1)).